A 278-amino-acid chain; its full sequence is Nucleotide-binding protein Tlet_0523 (278 aa).

Gly-9–Ser-16 provides a ligand contact to ATP. Asp-58–Ser-61 serves as a coordination point for GTP.

It belongs to the RapZ-like family.

Functionally, displays ATPase and GTPase activities. The protein is Nucleotide-binding protein Tlet_0523 of Pseudothermotoga lettingae (strain ATCC BAA-301 / DSM 14385 / NBRC 107922 / TMO) (Thermotoga lettingae).